The sequence spans 382 residues: Queuine tRNA-ribosyltransferase (382 aa).

Aspartate 93 functions as the Proton acceptor in the catalytic mechanism. Substrate-binding positions include aspartate 93–phenylalanine 97, aspartate 147, glutamine 191, and glycine 218. The segment at glycine 249–aspartate 255 is RNA binding. Aspartate 268 (nucleophile) is an active-site residue. The tract at residues threonine 273–arginine 277 is RNA binding; important for wobble base 34 recognition. Zn(2+)-binding residues include cysteine 306, cysteine 308, cysteine 311, and histidine 337.

This sequence belongs to the queuine tRNA-ribosyltransferase family. As to quaternary structure, homodimer. Within each dimer, one monomer is responsible for RNA recognition and catalysis, while the other monomer binds to the replacement base PreQ1. It depends on Zn(2+) as a cofactor.

The catalysed reaction is 7-aminomethyl-7-carbaguanine + guanosine(34) in tRNA = 7-aminomethyl-7-carbaguanosine(34) in tRNA + guanine. Its pathway is tRNA modification; tRNA-queuosine biosynthesis. Catalyzes the base-exchange of a guanine (G) residue with the queuine precursor 7-aminomethyl-7-deazaguanine (PreQ1) at position 34 (anticodon wobble position) in tRNAs with GU(N) anticodons (tRNA-Asp, -Asn, -His and -Tyr). Catalysis occurs through a double-displacement mechanism. The nucleophile active site attacks the C1' of nucleotide 34 to detach the guanine base from the RNA, forming a covalent enzyme-RNA intermediate. The proton acceptor active site deprotonates the incoming PreQ1, allowing a nucleophilic attack on the C1' of the ribose to form the product. After dissociation, two additional enzymatic reactions on the tRNA convert PreQ1 to queuine (Q), resulting in the hypermodified nucleoside queuosine (7-(((4,5-cis-dihydroxy-2-cyclopenten-1-yl)amino)methyl)-7-deazaguanosine). The protein is Queuine tRNA-ribosyltransferase of Haemophilus influenzae (strain PittEE).